The sequence spans 183 residues: ATP synthase subunit delta (183 aa).

This sequence belongs to the ATPase delta chain family. F-type ATPases have 2 components, F(1) - the catalytic core - and F(0) - the membrane proton channel. F(1) has five subunits: alpha(3), beta(3), gamma(1), delta(1), epsilon(1). F(0) has three main subunits: a(1), b(2) and c(10-14). The alpha and beta chains form an alternating ring which encloses part of the gamma chain. F(1) is attached to F(0) by a central stalk formed by the gamma and epsilon chains, while a peripheral stalk is formed by the delta and b chains.

It localises to the cell membrane. In terms of biological role, f(1)F(0) ATP synthase produces ATP from ADP in the presence of a proton or sodium gradient. F-type ATPases consist of two structural domains, F(1) containing the extramembraneous catalytic core and F(0) containing the membrane proton channel, linked together by a central stalk and a peripheral stalk. During catalysis, ATP synthesis in the catalytic domain of F(1) is coupled via a rotary mechanism of the central stalk subunits to proton translocation. Functionally, this protein is part of the stalk that links CF(0) to CF(1). It either transmits conformational changes from CF(0) to CF(1) or is implicated in proton conduction. This Halalkalibacterium halodurans (strain ATCC BAA-125 / DSM 18197 / FERM 7344 / JCM 9153 / C-125) (Bacillus halodurans) protein is ATP synthase subunit delta.